The following is an 828-amino-acid chain: Transcription factor SOX-6 (828 aa).

Residues 1–51 (MSSKQATSPFACAADGEDAMTQDLTSREKEEGSDQHVASHLPLHPIMHNKP) form a disordered region. Basic and acidic residues predominate over residues 25-34 (TSREKEEGSD). Position 119 is a phosphothreonine (Thr-119). Residues 184-262 (LAEKERQLST…LLQQQIQVQG (79 aa)) adopt a coiled-coil conformation. Residues 380–470 (SPGAKMPSTP…KSSIPSPIGG (91 aa)) form a disordered region. The segment covering 393–402 (NTAGTVSPTG) has biased composition (polar residues). Position 399 is a phosphoserine (Ser-399). Thr-401 is modified (phosphothreonine). Residues Lys-404 and Lys-417 each participate in a glycyl lysine isopeptide (Lys-Gly) (interchain with G-Cter in SUMO) cross-link. A phosphoserine mark is found at Ser-439 and Ser-442. Over residues 439–461 (SPTSPTQNLFPASKTSPVNLPNK) the composition is skewed to polar residues. A DNA-binding region (HMG box) is located at residues 621-689 (IKRPMNAFMV…IHLEKYPNYK (69 aa)). The span at 753 to 781 (TPSPQMTSDCSSTSASPEPSLPVIQSTYG) shows a compositional bias: polar residues. The interval 753 to 828 (TPSPQMTSDC…NEAPEAVSAN (76 aa)) is disordered. A compositionally biased stretch (acidic residues) spans 796-809 (NGEDEMEMYDDYED).

In terms of assembly, homodimer. Interacts with DAZAP2. May interact with CENPK. Post-translationally, sumoylation inhibits the transcriptional activity. As to expression, expressed in a wide variety of tissues, most abundantly in skeletal musclen.

It is found in the nucleus. It localises to the cytoplasm. In terms of biological role, transcription factor that plays a key role in several developmental processes, including neurogenesis, chondrocytes differentiation and cartilage formation. Specifically binds the 5'-AACAAT-3' DNA motif present in enhancers and super-enhancers and promotes expression of genes important for chondrogenesis. Required for overt chondrogenesis when condensed prechondrocytes differentiate into early stage chondrocytes: SOX5 and SOX6 cooperatively bind with SOX9 on active enhancers and super-enhancers associated with cartilage-specific genes, and thereby potentiate SOX9's ability to transactivate. Not involved in precartilaginous condensation, the first step in chondrogenesis, during which skeletal progenitors differentiate into prechondrocytes. Together with SOX5, required to form and maintain a pool of highly proliferating chondroblasts between epiphyses and metaphyses, to form columnar chondroblasts, delay chondrocyte prehypertrophy but promote hypertrophy, and to delay terminal differentiation of chondrocytes on contact with ossification fronts. Binds to the proximal promoter region of the myelin protein MPZ gene, and is thereby involved in the differentiation of oligodendroglia in the developing spinal tube. Binds to the gene promoter of MBP and acts as a transcriptional repressor. This Homo sapiens (Human) protein is Transcription factor SOX-6.